The primary structure comprises 254 residues: Type III pantothenate kinase (254 aa).

An ATP-binding site is contributed by 6-13; the sequence is DVGNTNTV. Substrate-binding positions include Tyr-100 and 107–110; that span reads GADR. Residue Asp-109 is the Proton acceptor of the active site. K(+) is bound at residue Asp-129. Thr-132 serves as a coordination point for ATP. Residue Thr-184 coordinates substrate.

It belongs to the type III pantothenate kinase family. Homodimer. Requires NH4(+) as cofactor. K(+) serves as cofactor.

It is found in the cytoplasm. The enzyme catalyses (R)-pantothenate + ATP = (R)-4'-phosphopantothenate + ADP + H(+). Its pathway is cofactor biosynthesis; coenzyme A biosynthesis; CoA from (R)-pantothenate: step 1/5. Its function is as follows. Catalyzes the phosphorylation of pantothenate (Pan), the first step in CoA biosynthesis. The chain is Type III pantothenate kinase from Syntrophus aciditrophicus (strain SB).